Reading from the N-terminus, the 156-residue chain is Persephin (156 aa).

Residues 1–21 form the signal peptide; that stretch reads MAVGKFLLGSLLLLSLQLGQG. 3 disulfides stabilise this stretch: Cys-66–Cys-124, Cys-93–Cys-152, and Cys-97–Cys-154.

It belongs to the TGF-beta family. GDNF subfamily. Homodimer; disulfide-linked. Interacts with GFRA4 coreceptor and RET: forms a 2:2:2 ternary complex composed of PSPN ligand, GFRA4 and RET receptor.

It localises to the secreted. Functionally, growth factor that exhibits neurotrophic activity on mesencephalic dopaminergic and motor neurons. Acts by binding to its coreceptor, GFRA4, leading to autophosphorylation and activation of the RET receptor. In Homo sapiens (Human), this protein is Persephin.